Reading from the N-terminus, the 555-residue chain is 4-coumarate--CoA ligase-like 9 (555 aa).

Ser200, Ser201, Gly202, Thr203, Thr204, and Lys208 together coordinate ATP. Tyr248 is a binding site for (E)-4-coumaroyl-AMP. Arg269 contacts CoA. Residues Asp271–Glu342 are SBD1. Residue Ala320 coordinates (E)-4-coumaroyl-AMP. ATP contacts are provided by Glu342, Ala343, Thr347, Asp431, and Arg446. 2 residues coordinate (E)-4-coumaroyl-AMP: Ala343 and Thr347. The interval Ala343–Tyr410 is SBD2. (E)-4-coumaroyl-AMP contacts are provided by Lys448 and Lys452. CoA-binding residues include Lys454 and Gly455. Lys537 provides a ligand contact to ATP.

This sequence belongs to the ATP-dependent AMP-binding enzyme family. In terms of assembly, interacts with STS1. Requires Mg(2+) as cofactor.

It catalyses the reaction (E)-4-coumarate + ATP + CoA = (E)-4-coumaroyl-CoA + AMP + diphosphate. It carries out the reaction (E)-4-coumarate + ATP + H(+) = (E)-4-coumaroyl-AMP + diphosphate. The enzyme catalyses (E)-4-coumaroyl-AMP + CoA = (E)-4-coumaroyl-CoA + AMP + H(+). In terms of biological role, carboxylate--CoA ligase that may use 4-coumarate as substrate. Follows a two-step reaction mechanism, wherein the carboxylate substrate first undergoes adenylation by ATP, followed by a thioesterification in the presence of CoA to yield the final CoA thioester. This is 4-coumarate--CoA ligase-like 9 (4CLL9) from Oryza sativa subsp. japonica (Rice).